Consider the following 340-residue polypeptide: HTH-type transcriptional regulator PtxS (340 aa).

An HTH lacI-type domain is found at 12–67; that stretch reads VTISEVAQAAGVSKATVSRYIGGDRQLLADATAQRIEAVIEQLGYRPNRMASALKR. The segment at residues 14–33 is a DNA-binding region (H-T-H motif); sequence ISEVAQAAGVSKATVSRYIG.

As to quaternary structure, homodimer.

With respect to regulation, 2-ketogluconate acts as a molecular effector and causes dissociation of PtxS from its target promoter. Glucose negatively affects the molecular binding of PtxS and 2KGA, and gluconic acid inhibits the PtxS-2KGA binding reaction. Functionally, involved in the regulation of 2-ketogluconic acid metabolism via the control of the expression of the kgu operon. Binds directly to a 14-bp palindrome sequence via its conserved HTH motif. This Pseudomonas plecoglossicida protein is HTH-type transcriptional regulator PtxS.